The primary structure comprises 476 residues: Bifunctional protein GlmU (476 aa).

A pyrophosphorylase region spans residues 1 to 235; that stretch reads MTALDIIIMA…ALQVAGVNSP (235 aa). UDP-N-acetyl-alpha-D-glucosamine-binding positions include lysine 23, glutamine 81, 86 to 87, 108 to 110, glycine 145, glutamate 160, and asparagine 233; these read GT and SGD. Aspartate 110 serves as a coordination point for Mg(2+). Asparagine 233 is a Mg(2+) binding site. Residues 236-256 form a linker region; the sequence is AQLAELERAHQRAQAAALMEQ. The N-acetyltransferase stretch occupies residues 257–476; sequence GVRLADPARF…WKRPAKQAKG (220 aa). Positions 351 and 369 each coordinate UDP-N-acetyl-alpha-D-glucosamine. The active-site Proton acceptor is the histidine 381. UDP-N-acetyl-alpha-D-glucosamine-binding residues include tyrosine 384 and asparagine 395. Acetyl-CoA-binding positions include alanine 398, 404–405, serine 423, glycine 441, and arginine 458; that span reads NY.

It in the N-terminal section; belongs to the N-acetylglucosamine-1-phosphate uridyltransferase family. This sequence in the C-terminal section; belongs to the transferase hexapeptide repeat family. In terms of assembly, homotrimer. The cofactor is Mg(2+).

Its subcellular location is the cytoplasm. It carries out the reaction alpha-D-glucosamine 1-phosphate + acetyl-CoA = N-acetyl-alpha-D-glucosamine 1-phosphate + CoA + H(+). The enzyme catalyses N-acetyl-alpha-D-glucosamine 1-phosphate + UTP + H(+) = UDP-N-acetyl-alpha-D-glucosamine + diphosphate. It functions in the pathway nucleotide-sugar biosynthesis; UDP-N-acetyl-alpha-D-glucosamine biosynthesis; N-acetyl-alpha-D-glucosamine 1-phosphate from alpha-D-glucosamine 6-phosphate (route II): step 2/2. It participates in nucleotide-sugar biosynthesis; UDP-N-acetyl-alpha-D-glucosamine biosynthesis; UDP-N-acetyl-alpha-D-glucosamine from N-acetyl-alpha-D-glucosamine 1-phosphate: step 1/1. The protein operates within bacterial outer membrane biogenesis; LPS lipid A biosynthesis. Catalyzes the last two sequential reactions in the de novo biosynthetic pathway for UDP-N-acetylglucosamine (UDP-GlcNAc). The C-terminal domain catalyzes the transfer of acetyl group from acetyl coenzyme A to glucosamine-1-phosphate (GlcN-1-P) to produce N-acetylglucosamine-1-phosphate (GlcNAc-1-P), which is converted into UDP-GlcNAc by the transfer of uridine 5-monophosphate (from uridine 5-triphosphate), a reaction catalyzed by the N-terminal domain. The sequence is that of Bifunctional protein GlmU from Acidovorax ebreus (strain TPSY) (Diaphorobacter sp. (strain TPSY)).